The sequence spans 176 residues: uncharacterized protein (176 aa).

Belongs to the mimivirus R160 family.

This is an uncharacterized protein from Acanthamoeba polyphaga mimivirus (APMV).